The chain runs to 560 residues: Serine palmitoyltransferase 2 (560 aa).

Residues 65–85 (PMLVAVLTYVGYGVLTLFGYL) traverse the membrane as a helical segment. Residue lysine 377 is modified to N6-(pyridoxal phosphate)lysine.

It belongs to the class-II pyridoxal-phosphate-dependent aminotransferase family. Component of the serine palmitoyltransferase (SPT) complex, which is composed of SPTLC1, SPTLC2 or SPTLC3 and SPTSSA or SPTSSB. The heterodimer consisting of SPTLC1 and SPTLC2/SPTLC3 forms the catalytic core of the enzyme, while SPTSSA or SPTSSB subunits determine substrate specificity. SPT also interacts with ORMDL proteins, especially ORMDL3, which negatively regulate SPT activity in the presence of ceramides. Forms dimers of heterodimers with SPTLC1. The cofactor is pyridoxal 5'-phosphate. As to expression, expressed in astrocytes.

It localises to the endoplasmic reticulum membrane. The enzyme catalyses L-serine + hexadecanoyl-CoA + H(+) = 3-oxosphinganine + CO2 + CoA. The catalysed reaction is octadecanoyl-CoA + L-serine + H(+) = 3-oxoeicosasphinganine + CO2 + CoA. It participates in lipid metabolism; sphingolipid metabolism. SPT complex catalytic activity is negatively regulated by ORMDL proteins, including ORMDL3, in the presence of ceramides. This mechanism allows to maintain ceramide levels at sufficient concentrations for the production of complex sphingolipids, but which prevents the accumulation of ceramides to levels that trigger apoptosis. Its function is as follows. Component of the serine palmitoyltransferase multisubunit enzyme (SPT) that catalyzes the initial and rate-limiting step in sphingolipid biosynthesis by condensing L-serine and activated acyl-CoA (most commonly palmitoyl-CoA) to form long-chain bases. The SPT complex is composed of SPTLC1, SPTLC2 or SPTLC3 and SPTSSA or SPTSSB. Within this complex, the heterodimer consisting of SPTLC1 and SPTLC2/SPTLC3 forms the catalytic core. The composition of the serine palmitoyltransferase (SPT) complex determines the substrate preference. The SPTLC1-SPTLC2-SPTSSA complex shows a strong preference for C16-CoA substrate, while the SPTLC1-SPTLC3-SPTSSA isozyme uses both C14-CoA and C16-CoA as substrates, with a slight preference for C14-CoA. The SPTLC1-SPTLC2-SPTSSB complex shows a strong preference for C18-CoA substrate, while the SPTLC1-SPTLC3-SPTSSB isozyme displays an ability to use a broader range of acyl-CoAs, without apparent preference. Crucial for adipogenesis. This Rattus norvegicus (Rat) protein is Serine palmitoyltransferase 2.